The following is a 762-amino-acid chain: Xaa-Pro dipeptidyl-peptidase (762 aa).

Catalysis depends on charge relay system residues serine 349, aspartate 469, and histidine 499.

This sequence belongs to the peptidase S15 family. Homodimer.

The protein localises to the cytoplasm. It carries out the reaction Hydrolyzes Xaa-Pro-|- bonds to release unblocked, N-terminal dipeptides from substrates including Ala-Pro-|-p-nitroanilide and (sequentially) Tyr-Pro-|-Phe-Pro-|-Gly-Pro-|-Ile.. In terms of biological role, removes N-terminal dipeptides sequentially from polypeptides having unsubstituted N-termini provided that the penultimate residue is proline. The protein is Xaa-Pro dipeptidyl-peptidase of Streptococcus sanguinis (strain SK36).